The sequence spans 268 residues: 4-hydroxy-tetrahydrodipicolinate reductase (268 aa).

Residues 10-15, Asp36, 99-101, and 123-126 contribute to the NAD(+) site; these read GASGRM, GTT, and APNM. His156 acts as the Proton donor/acceptor in catalysis. His157 provides a ligand contact to (S)-2,3,4,5-tetrahydrodipicolinate. The active-site Proton donor is the Lys160. Residue 166–167 coordinates (S)-2,3,4,5-tetrahydrodipicolinate; sequence GT.

This sequence belongs to the DapB family.

The protein localises to the cytoplasm. The enzyme catalyses (S)-2,3,4,5-tetrahydrodipicolinate + NAD(+) + H2O = (2S,4S)-4-hydroxy-2,3,4,5-tetrahydrodipicolinate + NADH + H(+). It catalyses the reaction (S)-2,3,4,5-tetrahydrodipicolinate + NADP(+) + H2O = (2S,4S)-4-hydroxy-2,3,4,5-tetrahydrodipicolinate + NADPH + H(+). Its pathway is amino-acid biosynthesis; L-lysine biosynthesis via DAP pathway; (S)-tetrahydrodipicolinate from L-aspartate: step 4/4. Catalyzes the conversion of 4-hydroxy-tetrahydrodipicolinate (HTPA) to tetrahydrodipicolinate. In Herminiimonas arsenicoxydans, this protein is 4-hydroxy-tetrahydrodipicolinate reductase.